The sequence spans 633 residues: Probable methyltransferase PMT15 (633 aa).

Residues 1 to 24 (MGNYRWPSKLSKLSLRAKQTNLYR) lie on the Cytoplasmic side of the membrane. A helical; Signal-anchor for type II membrane protein transmembrane segment spans residues 25–45 (VILIAILCVTFYFVGVWQHSG). Over 46 to 633 (RGISRSSISN…APAPDQSSDP (588 aa)) the chain is Lumenal. Asn113 and Asn298 each carry an N-linked (GlcNAc...) asparagine glycan.

It belongs to the methyltransferase superfamily.

It localises to the golgi apparatus membrane. The chain is Probable methyltransferase PMT15 from Arabidopsis thaliana (Mouse-ear cress).